A 312-amino-acid chain; its full sequence is Ribonuclease Z (312 aa).

Zn(2+) is bound by residues His62, His64, Asp66, His67, His144, Asp215, and His273. Asp66 functions as the Proton acceptor in the catalytic mechanism.

Belongs to the RNase Z family. Homodimer. Requires Zn(2+) as cofactor.

It carries out the reaction Endonucleolytic cleavage of RNA, removing extra 3' nucleotides from tRNA precursor, generating 3' termini of tRNAs. A 3'-hydroxy group is left at the tRNA terminus and a 5'-phosphoryl group is left at the trailer molecule.. Functionally, zinc phosphodiesterase, which displays some tRNA 3'-processing endonuclease activity. Probably involved in tRNA maturation, by removing a 3'-trailer from precursor tRNA. The protein is Ribonuclease Z of Prochlorococcus marinus (strain MIT 9312).